Consider the following 102-residue polypeptide: Small ribosomal subunit protein uS10 (102 aa).

Residues 37-61 (PIPLPTKSLKITTRKSTDGEGSSSF) are disordered.

The protein belongs to the universal ribosomal protein uS10 family. Part of the 30S ribosomal subunit.

Functionally, involved in the binding of tRNA to the ribosomes. This Methanococcus vannielii (strain ATCC 35089 / DSM 1224 / JCM 13029 / OCM 148 / SB) protein is Small ribosomal subunit protein uS10.